A 322-amino-acid chain; its full sequence is Corticotropin-releasing factor-binding protein (322 aa).

The first 24 residues, 1–24, serve as a signal peptide directing secretion; it reads MSPNFKLQCHFTLILLTALRGESR. 5 disulfide bridges follow: cysteine 60/cysteine 81, cysteine 104/cysteine 141, cysteine 183/cysteine 205, cysteine 237/cysteine 264, and cysteine 277/cysteine 318. Asparagine 204 is a glycosylation site (N-linked (GlcNAc...) asparagine).

Belongs to the CRF-binding protein family.

It localises to the secreted. Functionally, binds CRF and inactivates it. May prevent inappropriate pituitary-adrenal stimulation in pregnancy. The chain is Corticotropin-releasing factor-binding protein (Crhbp) from Rattus norvegicus (Rat).